Consider the following 209-residue polypeptide: Orotate phosphoribosyltransferase (209 aa).

Residues arginine 96, lysine 100, histidine 102, and 122-130 (EDLISTGGS) each bind 5-phospho-alpha-D-ribose 1-diphosphate. Serine 126 is a binding site for orotate.

Belongs to the purine/pyrimidine phosphoribosyltransferase family. PyrE subfamily. Homodimer. It depends on Mg(2+) as a cofactor.

The enzyme catalyses orotidine 5'-phosphate + diphosphate = orotate + 5-phospho-alpha-D-ribose 1-diphosphate. It functions in the pathway pyrimidine metabolism; UMP biosynthesis via de novo pathway; UMP from orotate: step 1/2. Its function is as follows. Catalyzes the transfer of a ribosyl phosphate group from 5-phosphoribose 1-diphosphate to orotate, leading to the formation of orotidine monophosphate (OMP). The protein is Orotate phosphoribosyltransferase of Streptococcus agalactiae serotype III (strain NEM316).